A 335-amino-acid polypeptide reads, in one-letter code: Ethanol acetyltransferase 1 (335 aa).

In terms of domain architecture, AB hydrolase-1 spans 48 to 300; it reads PIVFVHGIFG…NSAHDILDQR (253 aa). Active-site charge relay system residues include Ser121, Asp145, and His294.

It belongs to the AB hydrolase superfamily.

The protein localises to the mitochondrion. The enzyme catalyses ethanol + acetyl-CoA = ethyl acetate + CoA. It carries out the reaction acetyl-CoA + H2O = acetate + CoA + H(+). The catalysed reaction is ethyl acetate + H2O = ethanol + acetate + H(+). Its function is as follows. Alcohol acetyltransferase that catalyzes the synthesis of ethyl acetate from ethanol and acetyl-CoA. Can also function as a thioesterase by hydrolyzing acetyl-CoA in the absence of ethanol, as well as esterase hydrolyzing ethyl acetate. The sequence is that of Ethanol acetyltransferase 1 (EAT1) from Cyberlindnera fabianii (Yeast).